A 150-amino-acid chain; its full sequence is 3-hydroxyacyl-[acyl-carrier-protein] dehydratase FabZ (150 aa).

The active site involves His52.

This sequence belongs to the thioester dehydratase family. FabZ subfamily.

It is found in the cytoplasm. It carries out the reaction a (3R)-hydroxyacyl-[ACP] = a (2E)-enoyl-[ACP] + H2O. Its function is as follows. Involved in unsaturated fatty acids biosynthesis. Catalyzes the dehydration of short chain beta-hydroxyacyl-ACPs and long chain saturated and unsaturated beta-hydroxyacyl-ACPs. The polypeptide is 3-hydroxyacyl-[acyl-carrier-protein] dehydratase FabZ (Variovorax paradoxus (strain S110)).